The following is a 469-amino-acid chain: 6-phospho-beta-galactosidase (469 aa).

5 residues coordinate D-galactose 6-phosphate: Q19, H116, N159, E160, and N297. Catalysis depends on E160, which acts as the Proton donor. E375 serves as the catalytic Nucleophile. D-galactose 6-phosphate is bound by residues S428, W429, K435, and Y437.

The protein belongs to the glycosyl hydrolase 1 family.

The catalysed reaction is a 6-phospho-beta-D-galactoside + H2O = D-galactose 6-phosphate + an alcohol. Its pathway is carbohydrate metabolism; lactose degradation; D-galactose 6-phosphate and beta-D-glucose from lactose 6-phosphate: step 1/1. This Streptococcus equi subsp. zooepidemicus (strain H70) protein is 6-phospho-beta-galactosidase.